Here is a 289-residue protein sequence, read N- to C-terminus: Shikimate kinase (289 aa).

ATP is bound at residue 84 to 94 (PMASGLSSSSA).

It belongs to the GHMP kinase family. Archaeal shikimate kinase subfamily.

The protein resides in the cytoplasm. The enzyme catalyses shikimate + ATP = 3-phosphoshikimate + ADP + H(+). Its pathway is metabolic intermediate biosynthesis; chorismate biosynthesis; chorismate from D-erythrose 4-phosphate and phosphoenolpyruvate: step 5/7. The chain is Shikimate kinase from Methanobrevibacter smithii (strain ATCC 35061 / DSM 861 / OCM 144 / PS).